The chain runs to 459 residues: Bifunctional protein GlmU (459 aa).

The pyrophosphorylase stretch occupies residues 1-228 (MNFKAIILAA…IEELMGVNSR (228 aa)). Residues 8–11 (LAAG), lysine 22, glutamine 72, and 77–78 (GT) contribute to the UDP-N-acetyl-alpha-D-glucosamine site. Mg(2+) is bound at residue aspartate 101. Glycine 138, glutamate 153, asparagine 168, and asparagine 226 together coordinate UDP-N-acetyl-alpha-D-glucosamine. Asparagine 226 lines the Mg(2+) pocket. Residues 229 to 249 (VELSKAEEIMRRRINESHMVN) form a linker region. The N-acetyltransferase stretch occupies residues 250 to 459 (GVTIIDTNST…KKNQKDDQSK (210 aa)). Positions 331 and 349 each coordinate UDP-N-acetyl-alpha-D-glucosamine. Histidine 361 functions as the Proton acceptor in the catalytic mechanism. Positions 364 and 375 each coordinate UDP-N-acetyl-alpha-D-glucosamine. Residues 384 to 385 (NY), serine 403, threonine 421, and arginine 438 each bind acetyl-CoA.

The protein in the N-terminal section; belongs to the N-acetylglucosamine-1-phosphate uridyltransferase family. This sequence in the C-terminal section; belongs to the transferase hexapeptide repeat family. As to quaternary structure, homotrimer. Requires Mg(2+) as cofactor.

The protein resides in the cytoplasm. The catalysed reaction is alpha-D-glucosamine 1-phosphate + acetyl-CoA = N-acetyl-alpha-D-glucosamine 1-phosphate + CoA + H(+). It carries out the reaction N-acetyl-alpha-D-glucosamine 1-phosphate + UTP + H(+) = UDP-N-acetyl-alpha-D-glucosamine + diphosphate. It functions in the pathway nucleotide-sugar biosynthesis; UDP-N-acetyl-alpha-D-glucosamine biosynthesis; N-acetyl-alpha-D-glucosamine 1-phosphate from alpha-D-glucosamine 6-phosphate (route II): step 2/2. The protein operates within nucleotide-sugar biosynthesis; UDP-N-acetyl-alpha-D-glucosamine biosynthesis; UDP-N-acetyl-alpha-D-glucosamine from N-acetyl-alpha-D-glucosamine 1-phosphate: step 1/1. Its pathway is bacterial outer membrane biogenesis; LPS lipid A biosynthesis. In terms of biological role, catalyzes the last two sequential reactions in the de novo biosynthetic pathway for UDP-N-acetylglucosamine (UDP-GlcNAc). The C-terminal domain catalyzes the transfer of acetyl group from acetyl coenzyme A to glucosamine-1-phosphate (GlcN-1-P) to produce N-acetylglucosamine-1-phosphate (GlcNAc-1-P), which is converted into UDP-GlcNAc by the transfer of uridine 5-monophosphate (from uridine 5-triphosphate), a reaction catalyzed by the N-terminal domain. This is Bifunctional protein GlmU from Clostridioides difficile (strain 630) (Peptoclostridium difficile).